The sequence spans 253 residues: PAXIP1-associated glutamate-rich protein 1A (253 aa).

2 disordered regions span residues 1–108 and 126–253; these read MSLA…MPPP and LQAE…QRKY. The span at 45–66 shows a compositional bias: basic and acidic residues; the sequence is KAEEEGKGSQEEAGREGSRPEE. Residues 115–159 are sufficient for interaction with NCOA1; it reads YELLATQGTLELQAEILPRRPPTPEAQSEEERSDEEPEAKEEEEE. At Thr137 the chain carries Phosphothreonine. Acidic residues predominate over residues 141-158; sequence QSEEERSDEEPEAKEEEE. 2 positions are modified to phosphoserine: Ser142 and Ser147. The sufficient for interaction with ESR1 stretch occupies residues 160 to 253; it reads KPHMPTEFDF…NSLFPRQRKY (94 aa). The span at 194 to 222 shows a compositional bias: basic and acidic residues; sequence QKREARLDKVLSDMKRHKKLEEQILRTGR. Ser236 carries the phosphoserine modification. Positions 238 to 247 are enriched in polar residues; it reads PLRSSGNSLF.

Component of the KMT2 family MLL2/MLL3 complex, at least composed of the histone methyltransferases KMT2D and/or KMT2C, the common subunits ASH2L, RBBP5, WDR5 and DPY30, and the complex type-specific subunits PAXIP1/PTIP, PAGR1, NCOA6 and KDM6A; PAXIP1 is required for the association with the MLL2/MLL3 complex. Forms a constitutive complex with PAXIP1/PTIP independently of the MLL2/MLL3 complex. Interacts with NCOA1, ESR1, NR3C1, AR.

The protein localises to the nucleus. In terms of biological role, its association with the histone methyltransferase MLL2/MLL3 complex is suggesting a role in epigenetic transcriptional activation. However, in association with PAXIP1/PTIP is proposed to function at least in part independently of the MLL2/MLL3 complex. Proposed to be recruited by PAXIP1 to sites of DNA damage where the PAGR1:PAXIP1 complex is required for cell survival in response to DNA damage independently of the MLL2/MLL3 complex. However, its function in DNA damage has been questioned. During immunoglobulin class switching in activated B-cells is involved in transcription regulation of downstream switch regions at the immunoglobulin heavy-chain (Igh) locus independently of the MLL2/MLL3 complex. Involved in both estrogen receptor-regulated gene transcription and estrogen-stimulated G1/S cell-cycle transition. Acts as a transcriptional cofactor for nuclear hormone receptors. Inhibits the induction properties of several steroid receptors such as NR3C1, AR and PPARG; the mechanism of inhibition appears to be gene-dependent. May be involved in the regulation of the BMP pathway in extraembryonic development. The chain is PAXIP1-associated glutamate-rich protein 1A from Mus musculus (Mouse).